A 122-amino-acid polypeptide reads, in one-letter code: Large ribosomal subunit protein uL14 (122 aa).

Belongs to the universal ribosomal protein uL14 family. Part of the 50S ribosomal subunit. Forms a cluster with proteins L3 and L19. In the 70S ribosome, L14 and L19 interact and together make contacts with the 16S rRNA in bridges B5 and B8.

Binds to 23S rRNA. Forms part of two intersubunit bridges in the 70S ribosome. In Mesomycoplasma hyopneumoniae (strain 232) (Mycoplasma hyopneumoniae), this protein is Large ribosomal subunit protein uL14.